Here is a 122-residue protein sequence, read N- to C-terminus: Large ribosomal subunit protein uL14c (122 aa).

The protein belongs to the universal ribosomal protein uL14 family. As to quaternary structure, part of the 50S ribosomal subunit.

It is found in the plastid. Its subcellular location is the chloroplast. Functionally, binds to 23S rRNA. This is Large ribosomal subunit protein uL14c from Physcomitrium patens (Spreading-leaved earth moss).